Reading from the N-terminus, the 152-residue chain is MASHASCIFCKIIKGEIPSFKLIETAKTYSFLDIQPIAEAHVLIIPKHHGAKLHNIPDDYLSDILPVVKKLTKVLKLDENNTPEGEGYNVLQNNGRIAHQVVDHVHFHLIPKKDEATGLGVGWPAEATDFDKLGKLHEKLKEELAKVDNEKL.

The HIT domain occupies 8 to 119 (IFCKIIKGEI…IPKKDEATGL (112 aa)). AMP is bound by residues 33–34 (DI), N93, 99–101 (HQV), and 106–108 (HFH). The Histidine triad motif motif lies at 104-108 (HVHFH). H106 acts as the Tele-AMP-histidine intermediate in catalysis.

The protein belongs to the HINT family. In terms of assembly, homodimer. The cofactor is Mg(2+).

It catalyses the reaction adenosine 5'-phosphoramidate + H2O = AMP + NH4(+). Functionally, hydrolyzes adenosine 5'-monophosphoramidate substrates such as AMP-morpholidate, AMP-N-alanine methyl ester, AMP-alpha-acetyl lysine methyl ester and AMP-NH2. The sequence is that of Adenosine 5'-monophosphoramidase HNT1 from Candida albicans (strain SC5314 / ATCC MYA-2876) (Yeast).